Consider the following 421-residue polypeptide: Phosphoribosylamine--glycine ligase (421 aa).

The ATP-grasp domain maps to 108-314 (KEIMVKYNVP…FAQNIDDIMM (207 aa)). ATP is bound at residue 134 to 195 (IEEQGAPIVV…EEFLDGEEFS (62 aa)). The Mg(2+) site is built by glutamate 284 and asparagine 286.

It belongs to the GARS family. The cofactor is Mg(2+). Mn(2+) serves as cofactor.

It catalyses the reaction 5-phospho-beta-D-ribosylamine + glycine + ATP = N(1)-(5-phospho-beta-D-ribosyl)glycinamide + ADP + phosphate + H(+). It functions in the pathway purine metabolism; IMP biosynthesis via de novo pathway; N(1)-(5-phospho-D-ribosyl)glycinamide from 5-phospho-alpha-D-ribose 1-diphosphate: step 2/2. In Streptococcus pyogenes serotype M1, this protein is Phosphoribosylamine--glycine ligase.